We begin with the raw amino-acid sequence, 656 residues long: Sulfate transporter 1.3 (656 aa).

The disordered stretch occupies residues 1–30 (MSARAHPVDDDGEISPVERSSPRQANTPYV). Topologically, residues 1 to 94 (MSARAHPVDD…GRKYNLKLFR (94 aa)) are cytoplasmic. Residues 95 to 115 (GDLIAGLTIASLCIPQDIGYA) form a helical membrane-spanning segment. Residues 116-119 (KLAS) lie on the Extracellular side of the membrane. The chain crosses the membrane as a helical span at residues 120-140 (LDPKYGLYSSFVPPLVYACMG). At 141 to 144 (SSKD) the chain is on the cytoplasmic side. The helical transmembrane segment at 145–165 (IAIGPVAVVSLLLGTLLRAEI) threads the bilayer. At 166-176 (DPNTNPNEYLR) the chain is on the extracellular side. 2 consecutive transmembrane segments (helical) span residues 177-197 (LAFT…FFRL) and 198-218 (GFLI…GAAI). Residues 219 to 256 (TIALQQLKGFLGINKFTKKTDIIAVLSSVISSAHHGWN) are Extracellular-facing. Residues 257-277 (WQTILISASFLIFLLISKFIG) traverse the membrane as a helical segment. Topologically, residues 278 to 283 (KRNKKL) are cytoplasmic. The helical transmembrane segment at 284 to 304 (FWIPAIAPLVSVIISTFFVYI) threads the bilayer. Residues 305–342 (TRADKKGVQIVKHLDKGLNPSSLRLIYFSGDYLLKGFR) are Extracellular-facing. A helical transmembrane segment spans residues 343 to 363 (IGVVSGMVALTEAVAIGRTFA). Residues 364–375 (AMKDYQIDGNKE) are Cytoplasmic-facing. The helical transmembrane segment at 376 to 396 (MVALGAMNVIGSMTSCYVSTG) threads the bilayer. The Extracellular segment spans residues 397–412 (SFSRSAVNFMAGCQTA). A helical membrane pass occupies residues 413-433 (VSNIIMSIVVLLTLLFLTPLF). Topologically, residues 434-441 (KYTPNAIL) are cytoplasmic. Residues 442-462 (AAIIINAVIPLVDVNATILIF) form a helical membrane-spanning segment. Residues 463–473 (KIDKLDFVACM) lie on the Extracellular side of the membrane. A helical membrane pass occupies residues 474–494 (GAFFGVIFVSVEIGLLIAVGI). Residues 495–656 (SFAKILLQVT…SCSPKLSDEV (162 aa)) lie on the Cytoplasmic side of the membrane. One can recognise an STAS domain in the interval 525-648 (QYPEATRIPG…LTVAEAVDSC (124 aa)).

It belongs to the SLC26A/SulP transporter (TC 2.A.53) family. Expressed in the phloem of cotyledons, hypocotyls and roots.

It is found in the membrane. In terms of biological role, high-affinity H(+)/sulfate cotransporter that mediates the loading of sulfate into the sieve tube. Plays a central role in the regulation of sulfate assimilation. The polypeptide is Sulfate transporter 1.3 (SULTR1;3) (Arabidopsis thaliana (Mouse-ear cress)).